Reading from the N-terminus, the 100-residue chain is uncharacterized protein (100 aa).

K98 is covalently cross-linked (Isoglutamyl lysine isopeptide (Lys-Gln) (interchain with Q-Cter in protein Pup)).

This is an uncharacterized protein from Mycobacterium tuberculosis (strain CDC 1551 / Oshkosh).